The primary structure comprises 215 residues: Ribonuclease HII (215 aa).

The RNase H type-2 domain occupies 19–213; that stretch reads QTVAGVDEVG…SLRQPSQQID (195 aa). Residues Asp-25, Glu-26, and Asp-121 each coordinate a divalent metal cation.

It belongs to the RNase HII family. Mn(2+) serves as cofactor. Requires Mg(2+) as cofactor.

The protein resides in the cytoplasm. It carries out the reaction Endonucleolytic cleavage to 5'-phosphomonoester.. Its function is as follows. Endonuclease that specifically degrades the RNA of RNA-DNA hybrids. The polypeptide is Ribonuclease HII (Synechococcus elongatus (strain ATCC 33912 / PCC 7942 / FACHB-805) (Anacystis nidulans R2)).